The primary structure comprises 199 residues: MAIEYVESSKLPTAWGMFEMHGFTDSETDKEHLVLSMGDLAGDEPVLVRIHSECLTGDALFSLRCDCGAQLQAAMHRISIEGRGAIFYLRQEGRGIGLVNKIRAYHLQDKGADTVEANEALGFGADMRDYSMLKPMFEKMGISRVKLMTNNPRKIDALIGLGIDIAERLPHETGRNPHNSHYLETKRGKLGHLLEGDSE.

R49–E53 serves as a coordination point for GTP. Zn(2+)-binding residues include C54, C65, and C67. Residues Q70, E92–R94, and T114 contribute to the GTP site. Catalysis depends on D126, which acts as the Proton acceptor. R128 acts as the Nucleophile in catalysis. GTP-binding residues include T149 and K154. Positions E172–E199 are disordered.

The protein belongs to the GTP cyclohydrolase II family. It depends on Zn(2+) as a cofactor.

It carries out the reaction GTP + 4 H2O = 2,5-diamino-6-hydroxy-4-(5-phosphoribosylamino)-pyrimidine + formate + 2 phosphate + 3 H(+). The protein operates within cofactor biosynthesis; riboflavin biosynthesis; 5-amino-6-(D-ribitylamino)uracil from GTP: step 1/4. Its function is as follows. Catalyzes the conversion of GTP to 2,5-diamino-6-ribosylamino-4(3H)-pyrimidinone 5'-phosphate (DARP), formate and pyrophosphate. The chain is GTP cyclohydrolase-2 from Teredinibacter turnerae (strain ATCC 39867 / T7901).